A 204-amino-acid polypeptide reads, in one-letter code: Dof zinc finger protein DOF3.1 (204 aa).

Residues 1 to 25 (MQDPAAYYQTMMAKQQQQQQPQFAE) form a disordered region. The segment at 29–83 (LKCPRCDSPNTKFCYYNNYNLSQPRHFCKSCRRYWTKGGALRNVPVGGGSRKNAT) adopts a Dof-type zinc-finger fold. Zn(2+) is bound by residues cysteine 31, cysteine 34, cysteine 56, and cysteine 59. Disordered regions lie at residues 70–128 (RNVP…TRML) and 182–204 (RTEP…AEKN). Positions 84 to 102 (KRSTSSSSSASSPSNSSQN) are enriched in low complexity. Residues 106–124 (KNPDPDPDPRNSQKPDLDP) are compositionally biased toward basic and acidic residues.

Its subcellular location is the nucleus. Transcription factor that binds specifically to a 5'-AA[AG]G-3' consensus core sequence. This is Dof zinc finger protein DOF3.1 (DOF3.1) from Arabidopsis thaliana (Mouse-ear cress).